The following is a 584-amino-acid chain: MGGGLMQLVAYGAQDVYLTGNPQITFWKVTYRRYTNFAMESIEQTFNGQADFGRRVTCTISRNGDLAYRTYLQVTLPEINQQMLPAGVGQNLASNVLGSTTPGANNKGLEYGVFARWLDFPGEQMISMVEVEIGGQRIDRQYGDWMHIWNQLTLTAEQQRGYYKMVGNTTQLTFITDPSFAAVDGPCATTAPTQVCAPRNALPETTLYVPFQFWYCRNPGLALPLIALQYHEIKINLDLRPIDECLWAVSSLHNVCDSAATPTKVATAYQQSLVAASLYVDYVFLDTDERRRMAQNPHEYLIEQLQFTGDESVGSSSNKIKLNFNHPCKELIWVVQPDQNVDYCASLICGTTLFQVLGAQPFNYTDAIDVLPNGVHAFRWTRICXKDLMHSSPQLVFLIRLAQLMQSLSLVGEYDEPNFEHVSLGSASAGGGFFPPASAASSRANGGAVDFQSAVSDAGTFVLTETSLDMHCWGENPVVTAKLQLNGQDRFSEREGTYFDLVQPYQHHTRSPDTGINLYSFALRPEEHQPSGTCNFSRIDNATLQLVLSNATVGGTNTAKVRVYATNYNVLRIMSGMGGLAYSN.

This sequence belongs to the NCLDV major capsid protein family.

Its subcellular location is the virion. Major protein of the capsid. The chain is Major capsid protein (MCP) from Haptolina ericina (CeV01).